The chain runs to 227 residues: Extracellular small neutral protease (227 aa).

The signal sequence occupies residues 1-29 (MRITLPLLSTAVGLGLTAAVLGTGPAATA). A propeptide spanning residues 30–42 (AAPQEPVRAAQLG) is cleaved from the precursor. Ca(2+) contacts are provided by Asp-156 and Thr-158. His-163 lines the Zn(2+) pocket. Glu-164 is an active-site residue. Residues His-167 and Asp-173 each coordinate Zn(2+). Cys-179 and Cys-192 are joined by a disulfide.

This sequence belongs to the peptidase M7 family. Ca(2+) serves as cofactor. Zn(2+) is required as a cofactor. Post-translationally, the N-terminus is blocked.

The protein localises to the secreted. It catalyses the reaction Hydrolyzes proteins with a preference for Tyr or Phe in the P1' position. Has no action on amino-acid p-nitroanilides.. The polypeptide is Extracellular small neutral protease (snpA) (Streptomyces lividans).